We begin with the raw amino-acid sequence, 221 residues long: 2-phospho-L-lactate guanylyltransferase (221 aa).

Belongs to the CofC family. Homodimer.

It catalyses the reaction (2S)-2-phospholactate + GTP + H(+) = (2S)-lactyl-2-diphospho-5'-guanosine + diphosphate. It participates in cofactor biosynthesis; coenzyme F420 biosynthesis. Functionally, guanylyltransferase that catalyzes the activation of (2S)-2-phospholactate (2-PL) as (2S)-lactyl-2-diphospho-5'-guanosine, via the condensation of 2-PL with GTP. It is involved in the biosynthesis of coenzyme F420, a hydride carrier cofactor. The sequence is that of 2-phospho-L-lactate guanylyltransferase from Methanothrix thermoacetophila (strain DSM 6194 / JCM 14653 / NBRC 101360 / PT) (Methanosaeta thermophila).